Consider the following 751-residue polypeptide: Cytosolic neutral trehalase (751 aa).

A compositionally biased stretch (polar residues) spans 1 to 10 (MSQVNTSQGP). Residues 1–59 (MSQVNTSQGPVAQGRQRRLSSLSEFNDPFSNAEVYYGPPTDPRKQKQAKPAKINRTRTM) are disordered. N-acetylserine is present on Ser2. Phosphoserine; by PKA is present on residues Ser20 and Ser21. Ser23 carries the post-translational modification Phosphoserine. Residues 45-55 (QKQAKPAKINR) show a composition bias toward basic residues. Thr58 is modified (phosphothreonine). Ser60 is subject to Phosphoserine; by PKA. Ser66 carries the post-translational modification Phosphoserine. The segment at 73-92 (FGKLQQTRRGSEDDTYSSSQ) is disordered. Ser83 is modified (phosphoserine; by PKA). Ca(2+) is bound by residues Asp114, Asp116, Asn118, Gln120, and Asp125. Residues Arg302, 309-310 (WD), Asn346, 355-357 (RSQ), Glu424, Arg473, and Gly476 contribute to the substrate site. Catalysis depends on proton donor/acceptor residues Asp478 and Glu674.

This sequence belongs to the glycosyl hydrolase 37 family. In terms of assembly, monomer. Interacts with BMH1 dimers; the interaction is direct and activates NTH1. Interacts with BMH2. Requires Ca(2+) as cofactor. Post-translationally, phosphorylated by protein kinase A (PKA); phosphorylation at Ser-60 and Ser-83 is required for activation by the 14-3-3 proteins BMH1 and BMH2.

It is found in the cytoplasm. The catalysed reaction is alpha,alpha-trehalose + H2O = alpha-D-glucose + beta-D-glucose. It functions in the pathway carbohydrate degradation. With respect to regulation, activated by calcium. Activated by protein kinase A (PKA)-mediated phosphorylation. In terms of biological role, hydrolyzes intracellular trehalose to glucose. The disaccharide trehalose serves as a storage carbohydrate that is mobilized during nutrient stress. Regulates the level of trehalose as a protectant for cell integrity during heat stress. The polypeptide is Cytosolic neutral trehalase (Saccharomyces cerevisiae (strain ATCC 204508 / S288c) (Baker's yeast)).